Consider the following 30-residue polypeptide: Fibrinogen (30 aa).

In terms of assembly, homodimer. In terms of tissue distribution, secreted into the hemolymph.

The protein localises to the secreted. The protein resides in the extracellular space. Functionally, clotting protein. This chain is Fibrinogen, found in Panulirus interruptus (California spiny lobster).